The chain runs to 467 residues: Uronate isomerase (467 aa).

It belongs to the metallo-dependent hydrolases superfamily. Uronate isomerase family.

The catalysed reaction is D-glucuronate = D-fructuronate. The enzyme catalyses aldehydo-D-galacturonate = keto-D-tagaturonate. It functions in the pathway carbohydrate metabolism; pentose and glucuronate interconversion. In Streptococcus uberis (strain ATCC BAA-854 / 0140J), this protein is Uronate isomerase.